The chain runs to 426 residues: Serine--tRNA ligase (426 aa).

L-serine is bound at residue Thr-231–Glu-233. An ATP-binding site is contributed by Arg-262–Glu-264. Residue Glu-285 participates in L-serine binding. Residue Glu-349–Ser-352 coordinates ATP. Ser-385 is a binding site for L-serine.

It belongs to the class-II aminoacyl-tRNA synthetase family. Type-1 seryl-tRNA synthetase subfamily. As to quaternary structure, homodimer. The tRNA molecule binds across the dimer.

The protein localises to the cytoplasm. The catalysed reaction is tRNA(Ser) + L-serine + ATP = L-seryl-tRNA(Ser) + AMP + diphosphate + H(+). It catalyses the reaction tRNA(Sec) + L-serine + ATP = L-seryl-tRNA(Sec) + AMP + diphosphate + H(+). It functions in the pathway aminoacyl-tRNA biosynthesis; selenocysteinyl-tRNA(Sec) biosynthesis; L-seryl-tRNA(Sec) from L-serine and tRNA(Sec): step 1/1. Its function is as follows. Catalyzes the attachment of serine to tRNA(Ser). Is also able to aminoacylate tRNA(Sec) with serine, to form the misacylated tRNA L-seryl-tRNA(Sec), which will be further converted into selenocysteinyl-tRNA(Sec). The protein is Serine--tRNA ligase of Saccharophagus degradans (strain 2-40 / ATCC 43961 / DSM 17024).